The sequence spans 489 residues: Oxysterol-binding protein-related protein 1B (489 aa).

The protein belongs to the OSBP family. Expressed at low levels in flowers.

May be involved in the transport of sterols. The polypeptide is Oxysterol-binding protein-related protein 1B (ORP1B) (Arabidopsis thaliana (Mouse-ear cress)).